The sequence spans 353 residues: UPF0283 membrane protein YcjF (353 aa).

A compositionally biased stretch (basic and acidic residues) spans 1-19 (MSEPLKPRIDFAEPLKEES). A disordered region spans residues 1–29 (MSEPLKPRIDFAEPLKEESTSTFKAQQTF). Polar residues predominate over residues 20-29 (TSTFKAQQTF). Transmembrane regions (helical) follow at residues 70 to 90 (MVLG…IQWT), 100 to 120 (AALG…GSVI), and 213 to 233 (ESTL…FIAW).

This sequence belongs to the UPF0283 family.

The protein localises to the cell inner membrane. This chain is UPF0283 membrane protein YcjF, found in Salmonella arizonae (strain ATCC BAA-731 / CDC346-86 / RSK2980).